A 566-amino-acid polypeptide reads, in one-letter code: MESQRNLLLLALLFVSFLLYTAWVEEKTPQVAPQVQTEQVDSSVPASVASSANSANLSDGVPNSPQQSSTDATSTELPASQSVTIANDELRLTISLVGGDIIKADLLQHDATLDSDTPYRLLDSGNGFTYIAQSGLIGQGPDANKNGRPLYDTTDTESVLADGQAEVSTMLHFVDADGNIFIKTFTLKRGEYVTNVAYQIENKTDSPLNVQLYAQLRETLSDDSGSMVMPVYRGGAFSTTETRYEKYSFSDMQDGPLQKTTEGGWVAMLQHYFVSAWIPSPTDQNVLYSNIIQDKEAAIGFKAPSKTIAPQSVAELETNLWVGPKIQEEMALVAKNLDLTVDYGWLWFIAQPLFKLLLFFQGIVGNWGVAIILITFTVKGALYPLTKAQYTSMAKMRLLQPKIKELREQFGEDRQKVSKAMMELYKKEKVNPLGGCFPILLQMPIFIALYWSLMESVELRHAPFMLWIQDLSVQDPYYILPILMGVSMFFIQKMSPTTVQDPMQQKVMQFMPVIFTFFFLWFPAGLVLYWLMSNVVTLIQQTLIYRSFEKKGLHQKEKEPVVLTKK.

Residues 6 to 26 (NLLLLALLFVSFLLYTAWVEE) traverse the membrane as a helical segment. The segment at 30–80 (QVAPQVQTEQVDSSVPASVASSANSANLSDGVPNSPQQSSTDATSTELPAS) is disordered. Polar residues predominate over residues 31-41 (VAPQVQTEQVD). Over residues 42 to 58 (SSVPASVASSANSANLS) the composition is skewed to low complexity. Over residues 61–80 (VPNSPQQSSTDATSTELPAS) the composition is skewed to polar residues. The next 4 membrane-spanning stretches (helical) occupy residues 356 to 376 (LLLFFQGIVGNWGVAIILITF), 433 to 453 (LGGCFPILLQMPIFIALYWSL), 471 to 491 (LSVQDPYYILPILMGVSMFFI), and 510 to 530 (FMPVIFTFFFLWFPAGLVLYW).

It belongs to the OXA1/ALB3/YidC family. Type 1 subfamily. In terms of assembly, interacts with the Sec translocase complex via SecD. Specifically interacts with transmembrane segments of nascent integral membrane proteins during membrane integration.

It is found in the cell inner membrane. Functionally, required for the insertion and/or proper folding and/or complex formation of integral membrane proteins into the membrane. Involved in integration of membrane proteins that insert both dependently and independently of the Sec translocase complex, as well as at least some lipoproteins. Aids folding of multispanning membrane proteins. This Psychromonas ingrahamii (strain DSM 17664 / CCUG 51855 / 37) protein is Membrane protein insertase YidC.